A 154-amino-acid polypeptide reads, in one-letter code: Iron sulfur cluster assembly protein 1, mitochondrial (154 aa).

It belongs to the NifU family. In terms of assembly, component of the core Fe-S cluster (ISC) assembly machinery. [2Fe-2S] cluster is required as a cofactor.

The protein localises to the mitochondrion matrix. It functions in the pathway cofactor biosynthesis; iron-sulfur cluster biosynthesis. Functionally, scaffold protein for the de novo synthesis of iron-sulfur (Fe-S) clusters within mitochondria, which is required for maturation of both mitochondrial and cytoplasmic [2Fe-2S] and [4Fe-4S] proteins. First, a [2Fe-2S] cluster is transiently assembled on the scaffold protein ISU1. In a second step, the cluster is released from ISU1, transferred to a glutaredoxin, followed by the formation of mitochondrial [2Fe-2S] proteins, the synthesis of [4Fe-4S] clusters and their target-specific insertion into the recipient apoproteins. Cluster assembly on ISU1 depends on the function of the cysteine desulfurase complex NFS1-ISD11, which serves as the sulfur donor for cluster synthesis, the iron-binding protein frataxin as the putative iron donor, and the electron transfer chain comprised of ferredoxin reductase and ferredoxin, which receive their electrons from NADH. The chain is Iron sulfur cluster assembly protein 1, mitochondrial (ISU1) from Eremothecium gossypii (strain ATCC 10895 / CBS 109.51 / FGSC 9923 / NRRL Y-1056) (Yeast).